A 477-amino-acid chain; its full sequence is 3-sulfolactaldehyde dehydrogenase (477 aa).

G232–S233 lines the NAD(+) pocket. The active-site Proton acceptor is E252. L253 lines the NAD(+) pocket. C286 functions as the Nucleophile in the catalytic mechanism. Position 380 (E380) interacts with NAD(+).

It belongs to the aldehyde dehydrogenase family.

It catalyses the reaction (2S)-3-sulfolactaldehyde + NAD(+) + H2O = (2S)-3-sulfolactate + NADH + 2 H(+). Functionally, part of the sulfo-TAL (or sulfo-SFT) pathway, a D-sulfoquinovose degradation pathway that produces sulfolactate (SL). Catalyzes the oxidation of 3-sulfolactaldehyde (SLA) to sulfolactate (SL). The polypeptide is 3-sulfolactaldehyde dehydrogenase (Priestia aryabhattai (Bacillus aryabhattai)).